Here is a 1251-residue protein sequence, read N- to C-terminus: Topoisomerase 1-associated factor 1 (1251 aa).

Disordered stretches follow at residues 328-354 (ERKMDSNKSFKPPRRARKEDMEPKDLG), 564-601 (RRKKKAAKAAGDQGDDEGQGDAEDDSADDERQAEKTSQ), 901-1021 (RRKT…YEGN), and 1041-1251 (ATFG…SDEE). Positions 344–354 (RKEDMEPKDLG) are enriched in basic and acidic residues. Positions 576–591 (QGDDEGQGDAEDDSAD) are enriched in acidic residues. Basic and acidic residues-rich tracts occupy residues 592 to 601 (DERQAEKTSQ) and 985 to 1011 (AEARARARRKKELEKARKIKSEMYVDP). 2 stretches are compositionally biased toward acidic residues: residues 1069-1079 (DGDDGEGEDAV) and 1103-1122 (GGEDSEEGDEDDESRSEEDG). Positions 1123–1136 (SAVSEAEAPAAAGR) are enriched in low complexity. A compositionally biased stretch (basic residues) spans 1137 to 1151 (RPNKRRKPAQKKKKR). Acidic residues predominate over residues 1157-1179 (SGEDDDVGMDMDVDVDADADADA). Over residues 1182-1205 (FTQSSKDGAVTNDTPLSSDPSRTT) the composition is skewed to polar residues.

This sequence belongs to the timeless family. In terms of assembly, component of the fork protection complex (FPC) consisting of TOF1 and CSM3.

The protein localises to the nucleus. Its function is as follows. Forms a fork protection complex (FPC) with CSM3 and which is required for chromosome segregation during meiosis and DNA damage repair. FPC coordinates leading and lagging strand synthesis and moves with the replication fork. FPC stabilizes replication forks in a configuration that is recognized by replication checkpoint sensors. The protein is Topoisomerase 1-associated factor 1 (TOF1) of Chaetomium globosum (strain ATCC 6205 / CBS 148.51 / DSM 1962 / NBRC 6347 / NRRL 1970) (Soil fungus).